Here is a 33-residue protein sequence, read N- to C-terminus: Dermaseptin-H9 (33 aa).

At leucine 33 the chain carries Leucine amide.

The protein belongs to the frog skin active peptide (FSAP) family. Dermaseptin subfamily. As to expression, expressed by the skin glands.

The protein localises to the secreted. Functionally, has antimicrobial activity. This Pithecopus hypochondrialis (Orange-legged leaf frog) protein is Dermaseptin-H9.